Reading from the N-terminus, the 672-residue chain is ABC transporter G family member 21 (672 aa).

Residues methionine 1 to histidine 35 show a composition bias toward polar residues. Residues methionine 1–leucine 59 are disordered. Residues serine 50–leucine 59 show a composition bias toward low complexity. An ABC transporter domain is found at leucine 68 to serine 322. Glycine 117–threonine 124 provides a ligand contact to ATP. Positions methionine 411–tyrosine 617 constitute an ABC transmembrane type-2 domain. 6 helical membrane passes run phenylalanine 429–tryptophan 449, valine 460–phenylalanine 480, leucine 512–leucine 532, leucine 543–isoleucine 563, valine 576–isoleucine 596, and tryptophan 649–leucine 669.

The protein belongs to the ABC transporter superfamily. ABCG family. Eye pigment precursor importer (TC 3.A.1.204) subfamily.

The protein localises to the membrane. This Arabidopsis thaliana (Mouse-ear cress) protein is ABC transporter G family member 21 (ABCG21).